The sequence spans 29 residues: Glucagon (29 aa).

This sequence belongs to the glucagon family.

The protein resides in the secreted. Glucagon plays a key role in glucose metabolism and homeostasis. Regulates blood glucose by increasing gluconeogenesis and decreasing glycolysis. In Lampetra fluviatilis (European river lamprey), this protein is Glucagon (gcg).